A 216-amino-acid polypeptide reads, in one-letter code: FMN-dependent NADH:quinone oxidoreductase 2 (216 aa).

FMN-binding positions include S9, 15–17, 96–99, and 140–143; these read SVS, MYNF, and SRGG.

It belongs to the azoreductase type 1 family. In terms of assembly, homodimer. The cofactor is FMN.

The enzyme catalyses 2 a quinone + NADH + H(+) = 2 a 1,4-benzosemiquinone + NAD(+). It catalyses the reaction N,N-dimethyl-1,4-phenylenediamine + anthranilate + 2 NAD(+) = 2-(4-dimethylaminophenyl)diazenylbenzoate + 2 NADH + 2 H(+). Its function is as follows. Quinone reductase that provides resistance to thiol-specific stress caused by electrophilic quinones. Also exhibits azoreductase activity. Catalyzes the reductive cleavage of the azo bond in aromatic azo compounds to the corresponding amines. The protein is FMN-dependent NADH:quinone oxidoreductase 2 of Xanthomonas euvesicatoria pv. vesicatoria (strain 85-10) (Xanthomonas campestris pv. vesicatoria).